Consider the following 341-residue polypeptide: MPTSVMNLPIDMTTMSSQERLEKMSQLPKIELMEEEEEEEMKPSSDNKIKFNISELLEDDRKPTTQSSPSASSEDSTNEIEQTAFNFNFDPKMNPISALLQLQQTFLNVGNQQNMISPLTMFPFFGLPTAQLMHFKNMSNPDVNIQSDNGEEKDEKSEGKDGETRDSTGGSPLESDAEDDDDIGRGSDDEANSSDPSQNRKKKTRTVFSRSQVSQLEMMFECKRYLSSQERSNLAQKLHLTETQVKIWFQNRRNKFKRQAQTDDTNISLQMHRANVFSIPATTALTSPILTIPTTSAGVNMRNMISSPMDASATAAARFLFGFGTLQAQQNLNASAQAQNM.

2 disordered regions span residues 1–78 (MPTS…DSTN) and 139–209 (SNPD…TVFS). A compositionally biased stretch (polar residues) spans 64-78 (TTQSSPSASSEDSTN). Residues 153–166 (KDEKSEGKDGETRD) show a composition bias toward basic and acidic residues. A DNA-binding region (homeobox) is located at residues 201 to 260 (KKKTRTVFSRSQVSQLEMMFECKRYLSSQERSNLAQKLHLTETQVKIWFQNRRNKFKRQA).

It belongs to the HMX homeobox family. As to expression, expressed in a subset of head neurons, including AIM and ASK (at protein level).

It is found in the nucleus. Its function is as follows. Transcription factor that binds to the promoter of target genes. Regulates fate specification and/or differentiation of multiple cell types arising from the embryonic mesodermal (M) lineage and the ABp(l/r)paa precursors. In the postembryonic M lineage, regulates cleavage orientation, cell proliferation and cell fate specification. Regulates hlh-1 expression to specify coelomocyte fate in the mesodermal (M) lineage. In AWC neurons, initiates expression of ceh-36, leading to the expression of terminal differentiation genes. Regulates ventral cephalic sheath (CEPsh) glia differentiation and expression of transcription factor hlh-17 in CEPsh glia. Promotes terminal differentiation and morphogenesis of the epithelial duct and pore cells. In the duct cell, cooperates with the EGF-Ras-ERK pathway in turning on the terminal differentiation gene lin-48. The chain is Homeobox protein mls-2 from Caenorhabditis elegans.